Here is a 194-residue protein sequence, read N- to C-terminus: Probable thymidylate kinase (194 aa).

7-14 (GIDGSGKT) is a binding site for ATP.

Belongs to the thymidylate kinase family.

It carries out the reaction dTMP + ATP = dTDP + ADP. This is Probable thymidylate kinase (tmk) from Methanothermobacter thermautotrophicus (strain ATCC 29096 / DSM 1053 / JCM 10044 / NBRC 100330 / Delta H) (Methanobacterium thermoautotrophicum).